A 471-amino-acid chain; its full sequence is Histidinol dehydrogenase (471 aa).

NAD(+)-binding residues include Tyr139, Gln204, and Asn236. The substrate site is built by Thr259, Gln281, and His284. Gln281 and His284 together coordinate Zn(2+). Active-site proton acceptor residues include Glu350 and His351. His351, Asp384, Glu438, and His443 together coordinate substrate. Asp384 is a Zn(2+) binding site. Zn(2+) is bound at residue His443.

It belongs to the histidinol dehydrogenase family. Zn(2+) serves as cofactor.

It carries out the reaction L-histidinol + 2 NAD(+) + H2O = L-histidine + 2 NADH + 3 H(+). Its pathway is amino-acid biosynthesis; L-histidine biosynthesis; L-histidine from 5-phospho-alpha-D-ribose 1-diphosphate: step 9/9. Its function is as follows. Catalyzes the sequential NAD-dependent oxidations of L-histidinol to L-histidinaldehyde and then to L-histidine. The protein is Histidinol dehydrogenase of Bifidobacterium longum (strain NCC 2705).